Reading from the N-terminus, the 209-residue chain is V-type ATP synthase subunit D (209 aa).

This sequence belongs to the V-ATPase D subunit family.

Functionally, produces ATP from ADP in the presence of a proton gradient across the membrane. The polypeptide is V-type ATP synthase subunit D (Anaeromyxobacter dehalogenans (strain 2CP-C)).